The primary structure comprises 221 residues: Uracil-DNA glycosylase (221 aa).

The active-site Proton acceptor is the D64.

It belongs to the uracil-DNA glycosylase (UDG) superfamily. UNG family.

It is found in the cytoplasm. It carries out the reaction Hydrolyzes single-stranded DNA or mismatched double-stranded DNA and polynucleotides, releasing free uracil.. Functionally, excises uracil residues from the DNA which can arise as a result of misincorporation of dUMP residues by DNA polymerase or due to deamination of cytosine. The sequence is that of Uracil-DNA glycosylase from Mycoplasmopsis pulmonis (strain UAB CTIP) (Mycoplasma pulmonis).